Consider the following 241-residue polypeptide: Probable transcriptional regulatory protein Maqu_2154 (241 aa).

Belongs to the TACO1 family.

The protein resides in the cytoplasm. This Marinobacter nauticus (strain ATCC 700491 / DSM 11845 / VT8) (Marinobacter aquaeolei) protein is Probable transcriptional regulatory protein Maqu_2154.